The primary structure comprises 251 residues: MILYEYPFNERIRTLLRLEDLFERFTFFLTQEDAREHHVALTTLFEISEVAGRADLKSDLMKELERQRQTLAPFRGNPGIEQSALEAVLGEIEQTLAGLSQMQGKTGQHLADNEWLASIRSRAIIPGGTCKFDLPSYYAWQQIHPDQRRQDIAKWVTPLLPLRDAAIIVLRLARESGQASKVMAMQGSYQQMLSGRSYQLMQVRVAPELRVIPEASANKYMLWVRFTVQDGDLRPRAVDVDVPFQLTLCSL.

This sequence belongs to the ZapD family. Interacts with FtsZ.

Its subcellular location is the cytoplasm. Its function is as follows. Cell division factor that enhances FtsZ-ring assembly. Directly interacts with FtsZ and promotes bundling of FtsZ protofilaments, with a reduction in FtsZ GTPase activity. The protein is Cell division protein ZapD of Paraburkholderia phytofirmans (strain DSM 17436 / LMG 22146 / PsJN) (Burkholderia phytofirmans).